The following is a 352-amino-acid chain: Dof zinc finger protein DOF1.8 (352 aa).

The disordered stretch occupies residues 24-46 (LKQQSNPPSPATPVERKARPEKD). Over residues 37–46 (VERKARPEKD) the composition is skewed to basic and acidic residues. The segment at 49–103 (LNCPRCNSLNTKFCYYNNYSLTQPRYFCKDCRRYWTAGGSLRNIPVGGGVRKNKR) adopts a Dof-type zinc-finger fold. Positions 51, 54, 76, and 79 each coordinate Zn(2+). Disordered regions lie at residues 93 to 136 (PVGG…PLPH) and 265 to 334 (GGDP…VGFW). Residues 104-129 (SSSNSSSSSPSSSSSSKKPLFANNNT) are compositionally biased toward low complexity. Basic and acidic residues predominate over residues 310 to 323 (ENNDEHSDHEHEKE).

The protein resides in the nucleus. Its function is as follows. Transcription factor that binds specifically to a 5'-AA[AG]G-3' consensus core sequence. The chain is Dof zinc finger protein DOF1.8 (DOF1.8) from Arabidopsis thaliana (Mouse-ear cress).